Here is a 96-residue protein sequence, read N- to C-terminus: Translation initiation factor 1A 1 (96 aa).

In terms of domain architecture, S1-like spans 8-82 (GSHDLRMPDD…EKGDITWRYE (75 aa)).

Belongs to the eIF-1A family.

Functionally, seems to be required for maximal rate of protein biosynthesis. Enhances ribosome dissociation into subunits and stabilizes the binding of the initiator Met-tRNA(I) to 40 S ribosomal subunits. This Haloquadratum walsbyi (strain DSM 16790 / HBSQ001) protein is Translation initiation factor 1A 1.